The chain runs to 641 residues: MSATPSRTPHLDRVTGPADLKAMSIADLTALASEVRREIVEVVSQTGGHLGSSLGVVELTVALHAVFNSPGDKLIWDVGHQCYPHKILTGRRSRMLTLRQAGGISGFPKRSESPHDAFGAGHSSTSISAALGFAVGRELGQPVGDTIAIIGDGSITAGMAYEALNHAGHLKSRMFVILNDNDMSIAPPVGALQHYLNTIARQAPFAALKAAAEGIEMHLPGPVRDGARRARQMVTAMPGGATLFEELGFDYIGPVDGHDMAELVETLRVTRARASGPVLIHVCTTKGKGYAPAEGAEDKLHGVSKFDIETGKQKKSIPNAPNYTAVFGERLTEEAARDQAIVAVTAAMPTGTGLDIMQKRFPRRVFDVGIAEQHAVTFAAGMAAAGLKPFLALYSSFVQRGYDQLVHDVALQNLPVRLMIDRAGLVGQDGATHAGAFDVSMLANLPNFTVMAAADEAELCHMVVTAAAHDSGPIALRYPRGEGRGVEMPERGEVLEIGKGRVMTEGTEVAILSFGAHLAQALKAAEMLEAEGVSTTVADARFCRPLDTDLIDRLIEGHAALITLEQGAMGGFGAMVLHYLARTGQLEKGRAIRTMTLPDCYIDHGSPEEMYAWAGLTANDIRDTALAAARPSKSVRIVHSA.

Thiamine diphosphate is bound by residues His80 and 121–123 (GHS). Asp152 provides a ligand contact to Mg(2+). Residues 153–154 (GS), Asn181, Tyr290, and Glu372 each bind thiamine diphosphate. Asn181 serves as a coordination point for Mg(2+).

It belongs to the transketolase family. DXPS subfamily. Homodimer. Mg(2+) serves as cofactor. Thiamine diphosphate is required as a cofactor.

The enzyme catalyses D-glyceraldehyde 3-phosphate + pyruvate + H(+) = 1-deoxy-D-xylulose 5-phosphate + CO2. It participates in metabolic intermediate biosynthesis; 1-deoxy-D-xylulose 5-phosphate biosynthesis; 1-deoxy-D-xylulose 5-phosphate from D-glyceraldehyde 3-phosphate and pyruvate: step 1/1. Catalyzes the acyloin condensation reaction between C atoms 2 and 3 of pyruvate and glyceraldehyde 3-phosphate to yield 1-deoxy-D-xylulose-5-phosphate (DXP). The sequence is that of 1-deoxy-D-xylulose-5-phosphate synthase from Rhodobacter capsulatus (Rhodopseudomonas capsulata).